A 207-amino-acid chain; its full sequence is LexA repressor (207 aa).

The H-T-H motif DNA-binding region spans 28–48; sequence VREIGEAVGLASSFTVHGHLS. Catalysis depends on for autocatalytic cleavage activity residues Ser130 and Lys168.

It belongs to the peptidase S24 family. As to quaternary structure, homodimer.

It carries out the reaction Hydrolysis of Ala-|-Gly bond in repressor LexA.. Represses a number of genes involved in the response to DNA damage (SOS response), including recA and lexA. In the presence of single-stranded DNA, RecA interacts with LexA causing an autocatalytic cleavage which disrupts the DNA-binding part of LexA, leading to derepression of the SOS regulon and eventually DNA repair. The protein is LexA repressor of Staphylococcus aureus (strain Newman).